Consider the following 860-residue polypeptide: Glucans biosynthesis glucosyltransferase H (860 aa).

6 consecutive transmembrane segments (helical) span residues 146–166 (ILLI…KGIL), 200–220 (ILLL…TALM), 519–539 (VFLT…FLVL), 576–596 (LFST…ILIW), 610–630 (TVSM…RMLF), and 686–706 (FLWW…VSVI).

Belongs to the glycosyltransferase 2 family. OpgH subfamily.

Its subcellular location is the cell inner membrane. It participates in glycan metabolism; osmoregulated periplasmic glucan (OPG) biosynthesis. In terms of biological role, involved in the biosynthesis of osmoregulated periplasmic glucans (OPGs). The chain is Glucans biosynthesis glucosyltransferase H from Pseudomonas syringae pv. syringae (strain B728a).